The following is a 940-amino-acid chain: Acetyl-coenzyme A synthetase (940 aa).

Residues 1 to 33 (MCCAIWSASRAPACSASQLSSSHAVRPSVVPDA) form the signal peptide. The segment at 1 to 289 (MCCAIWSASR…VQRSVTRLTA (289 aa)) is unknown. Disordered regions lie at residues 70–127 (TARA…RPRC), 157–202 (VAPP…ADSA), and 224–274 (ASSQ…QQTC). 2 stretches are compositionally biased toward polar residues: residues 72–95 (RATT…TAAS) and 107–120 (SSIS…TSGS). Low complexity-rich tracts occupy residues 184–202 (TAPP…ADSA) and 224–245 (ASSQ…SGRS). Over residues 258 to 274 (SSPTVQRNQTTVHQQTC) the composition is skewed to polar residues. Residues 290-940 (MSNPSHAEVP…SVFEAIRASK (651 aa)) are acetyl-coenzyme A synthetase. Residues 480–483 (RRGK) and T599 contribute to the CoA site. ATP is bound by residues 675-677 (GEP), 699-704 (DTWWQT), D796, and R811. S819 contacts CoA. R822 serves as a coordination point for ATP. The Mg(2+) site is built by V833, H835, and V838. Position 906 is an N6-acetyllysine (K906).

It belongs to the ATP-dependent AMP-binding enzyme family. The cofactor is Mg(2+). Acetylated on Lys-906 by Pat in the presence of acetyl-CoA as an acetyl donor and ATP. Acetylation results in the inactivation of the enzyme. Deacetylation by the SIR2-homolog deacetylase CobB is required to activate the enzyme.

The enzyme catalyses acetate + ATP + CoA = acetyl-CoA + AMP + diphosphate. Its function is as follows. Catalyzes the conversion of acetate into acetyl-CoA (AcCoA), an essential intermediate at the junction of anabolic and catabolic pathways. AcsA undergoes a two-step reaction. In the first half reaction, AcsA combines acetate with ATP to form acetyl-adenylate (AcAMP) intermediate. In the second half reaction, it can then transfer the acetyl group from AcAMP to the sulfhydryl group of CoA, forming the product AcCoA. This Mycolicibacterium smegmatis (strain ATCC 700084 / mc(2)155) (Mycobacterium smegmatis) protein is Acetyl-coenzyme A synthetase (acsA).